The primary structure comprises 227 residues: NAD(P)H-quinone oxidoreductase subunit K, chloroplastic (227 aa).

The [4Fe-4S] cluster site is built by cysteine 43, cysteine 44, cysteine 108, and cysteine 139.

The protein belongs to the complex I 20 kDa subunit family. In terms of assembly, NDH is composed of at least 16 different subunits, 5 of which are encoded in the nucleus. The cofactor is [4Fe-4S] cluster.

Its subcellular location is the plastid. It localises to the chloroplast thylakoid membrane. It catalyses the reaction a plastoquinone + NADH + (n+1) H(+)(in) = a plastoquinol + NAD(+) + n H(+)(out). The catalysed reaction is a plastoquinone + NADPH + (n+1) H(+)(in) = a plastoquinol + NADP(+) + n H(+)(out). In terms of biological role, NDH shuttles electrons from NAD(P)H:plastoquinone, via FMN and iron-sulfur (Fe-S) centers, to quinones in the photosynthetic chain and possibly in a chloroplast respiratory chain. The immediate electron acceptor for the enzyme in this species is believed to be plastoquinone. Couples the redox reaction to proton translocation, and thus conserves the redox energy in a proton gradient. The sequence is that of NAD(P)H-quinone oxidoreductase subunit K, chloroplastic from Spinacia oleracea (Spinach).